Consider the following 281-residue polypeptide: Protease HtpX homolog (281 aa).

The next 2 membrane-spanning stretches (helical) occupy residues valine 6–glycine 26 and serine 28–serine 48. Position 130 (histidine 130) interacts with Zn(2+). The active site involves glutamate 131. Residue histidine 134 coordinates Zn(2+). 2 helical membrane passes run valine 140 to valine 160 and isoleucine 181 to isoleucine 201. Glutamate 206 contacts Zn(2+).

Belongs to the peptidase M48B family. Requires Zn(2+) as cofactor.

The protein resides in the cell membrane. The protein is Protease HtpX homolog of Pelotomaculum thermopropionicum (strain DSM 13744 / JCM 10971 / SI).